A 258-amino-acid polypeptide reads, in one-letter code: Imidazole glycerol phosphate synthase subunit HisF (258 aa).

Residues Asp-11 and Asp-130 contribute to the active site.

The protein belongs to the HisA/HisF family. As to quaternary structure, heterodimer of HisH and HisF.

The protein localises to the cytoplasm. It catalyses the reaction 5-[(5-phospho-1-deoxy-D-ribulos-1-ylimino)methylamino]-1-(5-phospho-beta-D-ribosyl)imidazole-4-carboxamide + L-glutamine = D-erythro-1-(imidazol-4-yl)glycerol 3-phosphate + 5-amino-1-(5-phospho-beta-D-ribosyl)imidazole-4-carboxamide + L-glutamate + H(+). The protein operates within amino-acid biosynthesis; L-histidine biosynthesis; L-histidine from 5-phospho-alpha-D-ribose 1-diphosphate: step 5/9. Its function is as follows. IGPS catalyzes the conversion of PRFAR and glutamine to IGP, AICAR and glutamate. The HisF subunit catalyzes the cyclization activity that produces IGP and AICAR from PRFAR using the ammonia provided by the HisH subunit. The polypeptide is Imidazole glycerol phosphate synthase subunit HisF (Xanthomonas euvesicatoria pv. vesicatoria (strain 85-10) (Xanthomonas campestris pv. vesicatoria)).